Reading from the N-terminus, the 347-residue chain is NADH-quinone oxidoreductase subunit H (347 aa).

9 helical membrane passes run 13–33, 50–70, 82–102, 115–135, 161–181, 198–218, 248–268, 286–306, and 321–341; these read LLILLKSVALIVILLVGVAYI, PNVVGPWGLFQAFADLFKFVF, GVFLLAPVVAAGLALAAWAVI, VGILYVFAIASLEVYGVIMAG, IGFVIVTVLLAVGSLNLTDIV, FLDWHWLALFPMFIIFFISAL, FLLFFLGEYVAIVLMCALTTI, VPGVVWFVLKLVAVFFMFALV, and LGWKVFLPISLFMVVATAAFL.

Belongs to the complex I subunit 1 family. As to quaternary structure, NDH-1 is composed of 14 different subunits. Subunits NuoA, H, J, K, L, M, N constitute the membrane sector of the complex.

It is found in the cell inner membrane. It carries out the reaction a quinone + NADH + 5 H(+)(in) = a quinol + NAD(+) + 4 H(+)(out). In terms of biological role, NDH-1 shuttles electrons from NADH, via FMN and iron-sulfur (Fe-S) centers, to quinones in the respiratory chain. The immediate electron acceptor for the enzyme in this species is believed to be ubiquinone. Couples the redox reaction to proton translocation (for every two electrons transferred, four hydrogen ions are translocated across the cytoplasmic membrane), and thus conserves the redox energy in a proton gradient. This subunit may bind ubiquinone. This is NADH-quinone oxidoreductase subunit H from Chelativorans sp. (strain BNC1).